Here is a 340-residue protein sequence, read N- to C-terminus: 4-amino-5-hydroxymethyl-2-methylpyrimidine phosphate synthase THI13 (340 aa).

Lysine 62 is subject to N6-(pyridoxal phosphate)lysine. Histidine 66 is an active-site residue. 115 to 118 (GEFG) lines the pyridoxal 5'-phosphate pocket. Positions 195 to 199 (CCCFC) match the CCCFC; essential for catalytic activity, may be the site of iron coordination motif.

Belongs to the NMT1/THI5 family. Homodimer. Fe cation serves as cofactor.

The catalysed reaction is N(6)-(pyridoxal phosphate)-L-lysyl-[4-amino-5-hydroxymethyl-2-methylpyrimidine phosphate synthase] + L-histidyl-[4-amino-5-hydroxymethyl-2-methylpyrimidine phosphate synthase] + 2 Fe(3+) + 4 H2O = L-lysyl-[4-amino-5-hydroxymethyl-2-methylpyrimidine phosphate synthase] + (2S)-2-amino-5-hydroxy-4-oxopentanoyl-[4-amino-5-hydroxymethyl-2-methylpyrimidine phosphate synthase] + 4-amino-2-methyl-5-(phosphooxymethyl)pyrimidine + 3-oxopropanoate + 2 Fe(2+) + 2 H(+). It participates in cofactor biosynthesis; thiamine diphosphate biosynthesis. In terms of biological role, responsible for the formation of the pyrimidine heterocycle in the thiamine biosynthesis pathway. Catalyzes the formation of hydroxymethylpyrimidine phosphate (HMP-P) from histidine and pyridoxal phosphate (PLP). The protein uses PLP and the active site histidine to form HMP-P, generating an inactive enzyme. The enzyme can only undergo a single turnover, which suggests it is a suicide enzyme. The sequence is that of 4-amino-5-hydroxymethyl-2-methylpyrimidine phosphate synthase THI13 from Saccharomyces cerevisiae (strain ATCC 204508 / S288c) (Baker's yeast).